Reading from the N-terminus, the 533-residue chain is NAD(P)H-quinone oxidoreductase chain 4 1 (533 aa).

14 helical membrane passes run 6-26, 37-57, 87-107, 113-133, 137-157, 169-189, 209-229, 243-263, 277-297, 311-331, 332-352, 376-396, 417-437, and 461-481; these read FPWL…IPLI, YSLF…WQHF, LSMP…LASW, PKLF…VFTA, MLFF…ISIW, FILY…ALAF, WLEL…LSIF, NAPG…YALI, FAPV…LNAF, ISHM…GLNG, ALLQ…LAGV, FALF…SGFV, VTIL…LSML, and LFVA…PKLT.

This sequence belongs to the complex I subunit 4 family.

It localises to the cellular thylakoid membrane. It carries out the reaction a plastoquinone + NADH + (n+1) H(+)(in) = a plastoquinol + NAD(+) + n H(+)(out). The catalysed reaction is a plastoquinone + NADPH + (n+1) H(+)(in) = a plastoquinol + NADP(+) + n H(+)(out). NDH-1 shuttles electrons from NAD(P)H, via FMN and iron-sulfur (Fe-S) centers, to quinones in the respiratory chain. The immediate electron acceptor for the enzyme in this species is believed to be plastoquinone. Couples the redox reaction to proton translocation (for every two electrons transferred, four hydrogen ions are translocated across the cytoplasmic membrane), and thus conserves the redox energy in a proton gradient. This chain is NAD(P)H-quinone oxidoreductase chain 4 1, found in Synechococcus elongatus (strain ATCC 33912 / PCC 7942 / FACHB-805) (Anacystis nidulans R2).